The chain runs to 159 residues: Pathogenesis-related leaf protein 6 (159 aa).

An N-terminal signal peptide occupies residues 1–24 (MGLFNISLLLTCLMVLAIFHSCEA). Gln25 is modified (pyrrolidone carboxylic acid). The 116-residue stretch at 32 to 147 (LAVHNDARAQ…NGWWFISCNY (116 aa)) folds into the SCP domain. Disulfide bonds link Cys68-Cys136, Cys109-Cys115, and Cys131-Cys145.

The protein belongs to the CRISP family.

Functionally, probably involved in the defense reaction of plants against pathogens. Has antifungal activity. This is Pathogenesis-related leaf protein 6 (PR1B1) from Solanum lycopersicum (Tomato).